A 315-amino-acid chain; its full sequence is Cyclin-dependent kinase B2-2 (315 aa).

The region spanning Phe-16–Phe-306 is the Protein kinase domain. ATP contacts are provided by residues Val-22–Val-30 and Lys-45. Position 27 is a phosphotyrosine (Tyr-27). Residue Asp-147 is the Proton acceptor of the active site. Phosphothreonine is present on Thr-181.

This sequence belongs to the protein kinase superfamily. CMGC Ser/Thr protein kinase family. CDC2/CDKX subfamily. As to expression, expressed in flowers.

It carries out the reaction L-seryl-[protein] + ATP = O-phospho-L-seryl-[protein] + ADP + H(+). The catalysed reaction is L-threonyl-[protein] + ATP = O-phospho-L-threonyl-[protein] + ADP + H(+). The enzyme catalyses [DNA-directed RNA polymerase] + ATP = phospho-[DNA-directed RNA polymerase] + ADP + H(+). In Arabidopsis thaliana (Mouse-ear cress), this protein is Cyclin-dependent kinase B2-2 (CDKB2-2).